Here is a 927-residue protein sequence, read N- to C-terminus: MSEPTFKMTPMFEHYMSIKADYPDALLFYRMGDFYELFFDDAELAARELQITLTSRSRDPNNPIPMCGVPWHAVDTYVAQLVDKGYHIAICDQVEDPKTSKGLVKRAVTSVKTPGTVLDDANLSTKSHNYLGALCPGSDAEKGGFAWLDVSTGQWSGVDFRRQTELWQWVLKMAPRELLVPEGFQPPARTLLEGIRLVRLPLSRFDLKRSTERVLAAQGVREAAALGLEGREEIMRACGALLAYLAQTQMRSPEHLQPFLRLDLSRRLIIDEVTERNLEIFTRLNGRKGKGTLRHVLDETMTPMGGRLLEDMLRHPWREISPIVRIQDAVEWFYVDDGRRTALREALNGVYDMERLSTRISLNQGSPRDFIALRNSLAALPQVFTALIEPTTSLLLRPDQEKDASENTSQENGLTQPRALTELLKTWDAMEDCAQLLQSALVDNPPPVITDGGLFKSGYNAELDRLLDLAEHGEQKLQAMLAEEQSTTGIAKLKLGYNRVFGYYFEVSRAAHSGTVPYHFIRRQSLANAERFTTEALKNLEEELLSASDKRKALEYTLFQDLRQHMADQRERIAHMAQLIAHLDYWQSLAQVGRLNNWCRPGLETDGNLTIREGRHPVVEAMIGRANFVPNDFRLDEKRRLCLLTGPNMAGKSTVLRQVAIICLLAQMGSMVPATSARLGLVDRLFSRVGASDNLAQGQSTFMVEMMETARILRQATKRSLIILDEIGRGTSTYDGVALAWAMVEDLSRRAQGELRTLFATHYHELTALEGRVDGVFTMNIAISEYSGDILFLHKLVPGPADRSYGVEVARLAGVPGPVVQRARAILANLERGRDVARKAVVSAVCLPGIDLPETGPEEDMPVLQAAPPRSEHPVIELLRQIEPEELSPLDALKTLMEWKKLWSAQPGSAEQGESPDKHDEGKNSRG.

Residue 646–653 (GPNMAGKS) coordinates ATP. The tract at residues 904–927 (SAQPGSAEQGESPDKHDEGKNSRG) is disordered. Residues 915-927 (SPDKHDEGKNSRG) are compositionally biased toward basic and acidic residues.

It belongs to the DNA mismatch repair MutS family.

Functionally, this protein is involved in the repair of mismatches in DNA. It is possible that it carries out the mismatch recognition step. This protein has a weak ATPase activity. This Desulfovibrio desulfuricans (strain ATCC 27774 / DSM 6949 / MB) protein is DNA mismatch repair protein MutS.